The chain runs to 580 residues: Proline--tRNA ligase (580 aa).

This sequence belongs to the class-II aminoacyl-tRNA synthetase family. ProS type 1 subfamily. As to quaternary structure, homodimer.

The protein localises to the cytoplasm. It carries out the reaction tRNA(Pro) + L-proline + ATP = L-prolyl-tRNA(Pro) + AMP + diphosphate. Functionally, catalyzes the attachment of proline to tRNA(Pro) in a two-step reaction: proline is first activated by ATP to form Pro-AMP and then transferred to the acceptor end of tRNA(Pro). As ProRS can inadvertently accommodate and process non-cognate amino acids such as alanine and cysteine, to avoid such errors it has two additional distinct editing activities against alanine. One activity is designated as 'pretransfer' editing and involves the tRNA(Pro)-independent hydrolysis of activated Ala-AMP. The other activity is designated 'posttransfer' editing and involves deacylation of mischarged Ala-tRNA(Pro). The misacylated Cys-tRNA(Pro) is not edited by ProRS. The polypeptide is Proline--tRNA ligase (Maridesulfovibrio salexigens (strain ATCC 14822 / DSM 2638 / NCIMB 8403 / VKM B-1763) (Desulfovibrio salexigens)).